A 267-amino-acid polypeptide reads, in one-letter code: Tryptophan 2,3-dioxygenase (267 aa).

Substrate is bound by residues F44 to H48 and R114. H225 is a heme binding site. T239 is a substrate binding site.

Belongs to the tryptophan 2,3-dioxygenase family. Homotetramer. Heme serves as cofactor.

The enzyme catalyses L-tryptophan + O2 = N-formyl-L-kynurenine. Its pathway is amino-acid degradation; L-tryptophan degradation via kynurenine pathway; L-kynurenine from L-tryptophan: step 1/2. Heme-dependent dioxygenase that catalyzes the oxidative cleavage of the L-tryptophan (L-Trp) pyrrole ring and converts L-tryptophan to N-formyl-L-kynurenine. Catalyzes the oxidative cleavage of the indole moiety. The polypeptide is Tryptophan 2,3-dioxygenase (Nocardioides sp. (strain ATCC BAA-499 / JS614)).